The primary structure comprises 205 residues: Ras-related protein Rab-1A (205 aa).

An N-acetylserine modification is found at Ser2. GTP contacts are provided by Ser20, Gly21, Gly23, Lys24, Ser25, Cys26, Glu38, and Thr43. Ser25 serves as a coordination point for Mg(2+). A Switch 1 motif is present at residues 34 to 48; sequence DTYTESYISTIGVDF. Position 43 (Thr43) interacts with Mg(2+). Residues Lys49 and Lys61 each participate in a glycyl lysine isopeptide (Lys-Gly) (interchain with G-Cter in ubiquitin) cross-link. Asp66 is a binding site for Mg(2+). Residues 66 to 83 carry the Switch 2 motif; sequence DTAGQERFRTITSSYYRG. Residues Gly69, Asn124, Lys125, Asp127, Ala155, and Lys156 each coordinate GTP. The disordered stretch occupies residues 178 to 205; it reads PGATAGGAEKSNVKIQSTPVKQSGGGCC. Ser194 carries the phosphoserine modification. S-geranylgeranyl cysteine attachment occurs at residues Cys204 and Cys205.

Belongs to the small GTPase superfamily. Rab family. In terms of assembly, may interact with YIPF5. Interacts with C9orf72; the interaction mediates recruitment of RAB1A to the ATG1/ULK1 kinase complex. Interacts with GDI1; this promotes dissociation from membranes. Requires Mg(2+) as cofactor. In terms of processing, phosphorylated by CDK1 kinase during mitosis. Ubiquitinated via 'Lys-11'-linked ubiquitination on Lys-49 and Lys-61; impairing the recruitment of guanosine diphosphate (GDP) dissociation inhibitor 1/GDI1.

Its subcellular location is the golgi apparatus. It is found in the endoplasmic reticulum. The protein resides in the early endosome. It localises to the cytoplasm. The protein localises to the cytosol. Its subcellular location is the membrane. It is found in the melanosome. The catalysed reaction is GTP + H2O = GDP + phosphate + H(+). Regulated by guanine nucleotide exchange factors (GEFs) which promote the exchange of bound GDP for free GTP. Regulated by GTPase activating proteins (GAPs) which increase the GTP hydrolysis activity. Inhibited by GDP dissociation inhibitors (GDIs). Its function is as follows. The small GTPases Rab are key regulators of intracellular membrane trafficking, from the formation of transport vesicles to their fusion with membranes. Rabs cycle between an inactive GDP-bound form and an active GTP-bound form that is able to recruit to membranes different sets of downstream effectors directly responsible for vesicle formation, movement, tethering and fusion. RAB1A regulates vesicular protein transport from the endoplasmic reticulum (ER) to the Golgi compartment and on to the cell surface, and plays a role in IL-8 and growth hormone secretion. Required to modulate the compacted morphology of the Golgi. Regulates the level of CASR present at the cell membrane. Plays a role in cell adhesion and cell migration, via its role in protein trafficking. Plays a role in autophagosome assembly and cellular defense reactions against pathogenic bacteria. Plays a role in microtubule-dependent protein transport by early endosomes and in anterograde melanosome transport. This Canis lupus familiaris (Dog) protein is Ras-related protein Rab-1A (RAB1A).